Reading from the N-terminus, the 179-residue chain is Large ribosomal subunit protein uL6 (179 aa).

The protein belongs to the universal ribosomal protein uL6 family. As to quaternary structure, part of the 50S ribosomal subunit.

In terms of biological role, this protein binds to the 23S rRNA, and is important in its secondary structure. It is located near the subunit interface in the base of the L7/L12 stalk, and near the tRNA binding site of the peptidyltransferase center. The chain is Large ribosomal subunit protein uL6 from Trichodesmium erythraeum (strain IMS101).